The chain runs to 238 residues: Ribonuclease PH (238 aa).

Phosphate contacts are provided by residues arginine 86 and 124 to 126 (GTR).

This sequence belongs to the RNase PH family. In terms of assembly, homohexameric ring arranged as a trimer of dimers.

It catalyses the reaction tRNA(n+1) + phosphate = tRNA(n) + a ribonucleoside 5'-diphosphate. Phosphorolytic 3'-5' exoribonuclease that plays an important role in tRNA 3'-end maturation. Removes nucleotide residues following the 3'-CCA terminus of tRNAs; can also add nucleotides to the ends of RNA molecules by using nucleoside diphosphates as substrates, but this may not be physiologically important. Probably plays a role in initiation of 16S rRNA degradation (leading to ribosome degradation) during starvation. The sequence is that of Ribonuclease PH from Cupriavidus metallidurans (strain ATCC 43123 / DSM 2839 / NBRC 102507 / CH34) (Ralstonia metallidurans).